Consider the following 304-residue polypeptide: ATP synthase gamma chain (304 aa).

The protein belongs to the ATPase gamma chain family. F-type ATPases have 2 components, CF(1) - the catalytic core - and CF(0) - the membrane proton channel. CF(1) has five subunits: alpha(3), beta(3), gamma(1), delta(1), epsilon(1). CF(0) has three main subunits: a, b and c.

It is found in the cell membrane. Functionally, produces ATP from ADP in the presence of a proton gradient across the membrane. The gamma chain is believed to be important in regulating ATPase activity and the flow of protons through the CF(0) complex. This Chloroherpeton thalassium (strain ATCC 35110 / GB-78) protein is ATP synthase gamma chain.